Here is a 591-residue protein sequence, read N- to C-terminus: Alpha-(1-&gt;6)-mannopyranosyltransferase Rv1459c (591 aa).

The next 13 membrane-spanning stretches (helical) occupy residues 40-60 (FGATGTVLMAIGALGAGARPV), 80-100 (VSLTMTTTGAVMMALAWLMLG), 117-137 (TLLLWMLPLLIAPPMYSKDVY), 201-221 (IVAAVLCHRLVVLIGVTLIVW), 235-255 (VSALWLGAANPLLIMHLVAGI), 259-279 (ALMLGLMLTGVEFALRGLDMA), 321-341 (EWGPLAMLLAGSILITLSSQV), 367-387 (LLLAAAVMASLTLAIMAILGW), 408-428 (WMSPPTLLALGTGHVGILLGL), 441-461 (AIGVLIITVMVCWLLLAVLRG), 473-493 (LAVTVLLFPVVQPWYLLWAII), 502-522 (PGFRVAAILATLIVGIFGPTA), and 527-547 (FALFQIVDATAASAIIVILLI). The interval 569-591 (ESASKTPATRRPTAAPDAYADST) is disordered. Low complexity predominate over residues 574-584 (TPATRRPTAAP).

It belongs to the MptA/B family.

The protein resides in the membrane. Catalyzes the addition of alpha-(1-&gt;6)-mannose residue. The polypeptide is Alpha-(1-&gt;6)-mannopyranosyltransferase Rv1459c (Mycobacterium tuberculosis (strain ATCC 25618 / H37Rv)).